A 282-amino-acid chain; its full sequence is MTDVLAVIREMSSSFTPSEAKIAKYILENPTVVTELSVNELANACDTSEASIIRFCRTIGLKGFQELKIKIAVSLAKQTRKLDGGITSEDDVMAVIQKIANFNKQAIDSTIAVLNAEELTKAAEALANANKIDFYGVAASGVVAYDAMLKFSRINIPCTAYQDTHLQLTSAVNLKKGDVAFGISYSGATKEIVEAIQTAKEAGATTISLTKYGQSPLAKAADINLFVSSEEAMFRAGAMASRIAQLTVIDILFILVAQKKYNDVVRYLENTSEVLSMRKINN.

Positions 2–78 (TDVLAVIREM…IKIAVSLAKQ (77 aa)) constitute an HTH rpiR-type domain. The segment at residues 38 to 57 (VNELANACDTSEASIIRFCR) is a DNA-binding region (H-T-H motif). An SIS domain is found at 122-262 (AAEALANANK…FILVAQKKYN (141 aa)).

This is an uncharacterized protein from Caldanaerobacter subterraneus subsp. tengcongensis (strain DSM 15242 / JCM 11007 / NBRC 100824 / MB4) (Thermoanaerobacter tengcongensis).